Reading from the N-terminus, the 439-residue chain is Arginine biosynthesis bifunctional protein ArgJ, mitochondrial (439 aa).

6 residues coordinate substrate: Thr-175, Lys-201, Thr-212, Glu-301, Asn-434, and Ser-439. Thr-212 acts as the Nucleophile in catalysis.

It belongs to the ArgJ family. As to quaternary structure, heterodimer of an alpha and a beta chain. In terms of processing, the alpha and beta chains are autoproteolytically processed from a single precursor protein within the mitochondrion.

The protein resides in the mitochondrion matrix. The catalysed reaction is N(2)-acetyl-L-ornithine + L-glutamate = N-acetyl-L-glutamate + L-ornithine. It catalyses the reaction L-glutamate + acetyl-CoA = N-acetyl-L-glutamate + CoA + H(+). It participates in amino-acid biosynthesis; L-arginine biosynthesis; L-ornithine and N-acetyl-L-glutamate from L-glutamate and N(2)-acetyl-L-ornithine (cyclic): step 1/1. Its pathway is amino-acid biosynthesis; L-arginine biosynthesis; N(2)-acetyl-L-ornithine from L-glutamate: step 1/4. Catalyzes two activities which are involved in the cyclic version of arginine biosynthesis: the synthesis of acetylglutamate from glutamate and acetyl-CoA, and of ornithine by transacetylation between acetylornithine and glutamate. This Candida albicans (strain SC5314 / ATCC MYA-2876) (Yeast) protein is Arginine biosynthesis bifunctional protein ArgJ, mitochondrial (ECM42).